A 418-amino-acid polypeptide reads, in one-letter code: ATP phosphoribosyltransferase regulatory subunit (418 aa).

This sequence belongs to the class-II aminoacyl-tRNA synthetase family. HisZ subfamily. As to quaternary structure, heteromultimer composed of HisG and HisZ subunits.

It is found in the cytoplasm. Its pathway is amino-acid biosynthesis; L-histidine biosynthesis; L-histidine from 5-phospho-alpha-D-ribose 1-diphosphate: step 1/9. Functionally, required for the first step of histidine biosynthesis. May allow the feedback regulation of ATP phosphoribosyltransferase activity by histidine. The sequence is that of ATP phosphoribosyltransferase regulatory subunit from Acetivibrio thermocellus (strain ATCC 27405 / DSM 1237 / JCM 9322 / NBRC 103400 / NCIMB 10682 / NRRL B-4536 / VPI 7372) (Clostridium thermocellum).